The sequence spans 977 residues: MERRWPLGLALLLLLLCAPLPPGARAEEVTLMDTSTAQGELGWLLDPPETGWSEVQQMLNGTPLYMYQDCPIQEGGDTDHWLRSNWIYRGEEASRIYVELQFTVRDCKSFPGGAGPLGCKETFNLFYMESDQDVGIQLRRPLFQKVTTVAADQSFTIRDLASGSVKLNVERCSLGHLTRRGLYLAFHNPGSCVALVSVRVFYQRCAETVHGLAHFPDTLPGPGGLVEVAGTCLSHAQISLGSSGTPRMHCSPDGEWLVPVGQCQCEPGYEESSGNVGCTACPTGFYRVDMNTLRCLKCPQHSIAESEGSTICTCENGHYRAPGEGPQVACTRPPSAPQNLSFSTSGTQLSLRWEPPRDTGGRHDIRYSVECLQCRGIAQDGGPCQPCGKGVHFSPAASGLTTSTVQVQGLEPYANYTFTVKSQNRVSGLDSSSPSSASLSINMGHAESLSGLSLKLVKKEPRQLELTWAGSRPRNPGGNLSYELHVLNQDEEWHQMVLEPRVLLTKLQPDTTYIVRVRTLTPLGPGPFSPDHEFRTSPPVSRSLTGGEIVAVIFGLLLGIALLIGIYVFRSRRGQRQRQQRQRERTTNVDREDKLWLKPYVDLQAYEDPAQGALDFAQELDPAWLIVDTVIGEGEFGEVYRGALRLPSQDCKTVAIKTLKDTSPDGYWWNFLREATIMGQFNHPHILRLEGVITKRKPIMIITEFMENGALDAFLKEREDQLAPGQLVAMLLGIASGMNCLSGHNYVHRDLAARNILVNQNLCCKVSDFGLTRLLDDFDGTYETQGGKIPIRWTAPEAIAHRIFTTASDVWSFGIVMWEVLSFGDKPYGEMSNQEVMKSIEDGYRLPPPVDCPAPLYELMKNCWAYDRARRPHFLQLQAHLEQLLTDPHSLRTIANFDPRVTLRLPSLSGSDGIPYRSVSEWLESIRMKRYILHFRSAGLDTMECVLELTAEDLTQMGITLPGHQKRILCSIQGFKD.

The first 26 residues, 1 to 26, serve as a signal peptide directing secretion; that stretch reads MERRWPLGLALLLLLLCAPLPPGARA. Over 27–548 the chain is Extracellular; sequence EEVTLMDTST…PVSRSLTGGE (522 aa). Positions 28–210 constitute an Eph LBD domain; sequence EVTLMDTSTA…FYQRCAETVH (183 aa). 2 Fibronectin type-III domains span residues 333–446 and 448–539; these read PPSA…MGHA and SLSG…TSPP. N-linked (GlcNAc...) asparagine glycans are attached at residues Asn-415 and Asn-479. The helical transmembrane segment at 549 to 569 threads the bilayer; it reads IVAVIFGLLLGIALLIGIYVF. The Cytoplasmic portion of the chain corresponds to 570–977; sequence RSRRGQRQRQ…ILCSIQGFKD (408 aa). Phosphotyrosine; by autocatalysis occurs at positions 600 and 606. The region spanning 625-885 is the Protein kinase domain; that stretch reads LIVDTVIGEG…QLQAHLEQLL (261 aa). Residues 631–639 and Lys-657 each bind ATP; that span reads IGEGEFGEV. The Proton acceptor role is filled by Asp-750. A Phosphotyrosine; by autocatalysis modification is found at Tyr-782. Phosphoserine occurs at positions 907 and 911. One can recognise an SAM domain in the interval 914 to 977; sequence IPYRSVSEWL…ILCSIQGFKD (64 aa). Residues 975 to 977 carry the PDZ-binding motif; it reads FKD.

It belongs to the protein kinase superfamily. Tyr protein kinase family. Ephrin receptor subfamily. Homodimer. Forms a signaling complex with LCK; PTK2B/PYK2 and PI3-kinase upon activation by EFNA1; regulates T-lymphocytes migration. Interacts (via SAM domain) with ILK (via ANK repeats); stimulated by EFNA1 but independent of the kinase activity of EPHA1. Interacts (kinase activity-dependent) with PTK2/FAK1. Phosphorylated. Autophosphorylation is stimulated by its ligand EFNA1. Post-translationally, ubiquitinated. As to expression, preferentially expressed in epithelial cells including skin, kidney, liver and thymus. Expressed in myogenic progenitor cells.

The protein resides in the cell membrane. It carries out the reaction L-tyrosyl-[protein] + ATP = O-phospho-L-tyrosyl-[protein] + ADP + H(+). Its function is as follows. Receptor tyrosine kinase which binds promiscuously membrane-bound ephrin-A family ligands residing on adjacent cells, leading to contact-dependent bidirectional signaling into neighboring cells. The signaling pathway downstream of the receptor is referred to as forward signaling while the signaling pathway downstream of the ephrin ligand is referred to as reverse signaling. Binds with a low affinity EFNA3 and EFNA4 and with a high affinity to EFNA1 which most probably constitutes its cognate/functional ligand. Upon activation by EFNA1 induces cell attachment to the extracellular matrix inhibiting cell spreading and motility through regulation of ILK and downstream RHOA and RAC. Also plays a role in angiogenesis and regulates cell proliferation. May play a role in apoptosis. This Mus musculus (Mouse) protein is Ephrin type-A receptor 1 (Epha1).